The chain runs to 733 residues: Photosystem I P700 chlorophyll a apoprotein A2 (733 aa).

8 helical membrane passes run 46–69 (IFASHFGHLAIIFLWTSGNLFHVA), 134–157 (LYKGSIGLLLLASVLLIAGWLHLQ), 174–198 (LNHHLSGLLGFSSLAWTGHLVHVAI), 272–290 (MAHHHLAIAVVFIVAGHMY), 329–352 (LHMQLGLALACLGVATSLTAQHMY), 368–394 (AALYTHHQYIAGFLMVGAFAHGAIFFV), 416–438 (AIISHLSWASLFLGFHTLGLYIH), and 516–534 (FLVHHAIALGLHVTALILV). 2 residues coordinate [4Fe-4S] cluster: cysteine 558 and cysteine 567. A run of 2 helical transmembrane segments spans residues 574–595 (AFYLAMFWMLNTIGWVTFYWHW) and 642–664 (LSVWSWMFLFGHLIWATGFMFLI). Residues histidine 653, methionine 661, and tyrosine 669 each coordinate chlorophyll a. Residue tryptophan 670 coordinates phylloquinone. A helical transmembrane segment spans residues 706–726 (LVGLVHFSVGYILTYAAFVIA).

It belongs to the PsaA/PsaB family. In terms of assembly, the PsaA/B heterodimer binds the P700 chlorophyll special pair and subsequent electron acceptors. PSI consists of a core antenna complex that captures photons, and an electron transfer chain that converts photonic excitation into a charge separation. The eukaryotic PSI reaction center is composed of at least 11 subunits. P700 is a chlorophyll a/chlorophyll a' dimer, A0 is one or more chlorophyll a, A1 is one or both phylloquinones and FX is a shared 4Fe-4S iron-sulfur center. serves as cofactor.

It localises to the plastid. Its subcellular location is the chloroplast thylakoid membrane. The catalysed reaction is reduced [plastocyanin] + hnu + oxidized [2Fe-2S]-[ferredoxin] = oxidized [plastocyanin] + reduced [2Fe-2S]-[ferredoxin]. Its function is as follows. PsaA and PsaB bind P700, the primary electron donor of photosystem I (PSI), as well as the electron acceptors A0, A1 and FX. PSI is a plastocyanin/cytochrome c6-ferredoxin oxidoreductase, converting photonic excitation into a charge separation, which transfers an electron from the donor P700 chlorophyll pair to the spectroscopically characterized acceptors A0, A1, FX, FA and FB in turn. Oxidized P700 is reduced on the lumenal side of the thylakoid membrane by plastocyanin or cytochrome c6. This Thalassiosira pseudonana (Marine diatom) protein is Photosystem I P700 chlorophyll a apoprotein A2.